Reading from the N-terminus, the 353-residue chain is Trans-enoyl reductase RAP2 (353 aa).

C46–K49 contributes to the NADP(+) binding site. T131–M138 is a substrate binding site. NADP(+)-binding positions include S189–N192, Y207, and L254–E255. G274 to L278 provides a ligand contact to substrate. V343–S344 is an NADP(+) binding site.

It belongs to the zinc-containing alcohol dehydrogenase family. In terms of assembly, monomer.

Its pathway is secondary metabolite biosynthesis. Functionally, trans-enoyl reductase; part of the gene cluster that mediates the biosynthesis of a tyrosine-derived cytochalasan acting as a fungal signal recognized by resistant rice plants and leads to avirulence in Pi33 resistant rice cultivars. The first step in the pathway is catalyzed by the hybrid PKS-NRPS ACE1, assisted by the enoyl reductase RAP1, that are responsible for fusion of the tyrosine precursor and the polyketide backbone. The polyketide synthase module (PKS) of ACE1 is responsible for the synthesis of the polyketide backbone and the downstream nonribosomal peptide synthetase (NRPS) amidates the carboxyl end of the polyketide with the tyrosine precursor. Because ACE1 lacks a designated enoylreductase (ER) domain, the required activity is provided the enoyl reductase RAP1. Reduction by the hydrolyase ORFZ, followed by dehydration and intra-molecular Diels-Alder cyclization by the Diels-Alderase ORF3 then yield the required isoindolone-fused macrocycle. A number of oxidative steps catalyzed by the tailoring enzymes identified within the cluster, including cytochrome P450 monooxygenases CYP1 to CYP4, the FAD-linked oxidoreductase OXR2 and the short-chain dehydrogenase/reductase OXR1, are further required to afford the final cytochalasans that confer avirulence and which have still to be identified. The monooxygenase CYP1 has been shown to be a site-selective C-18 hydroxylase whereas the function of CYP3 is the site-selective epoxidation of the C-6/C-7 olefin that is present in some intermediate compounds. Finally, SYN2 and RAP2 are not required for avirulence in Pi33 resistant rice cultivars. This Pyricularia oryzae (strain 70-15 / ATCC MYA-4617 / FGSC 8958) (Rice blast fungus) protein is Trans-enoyl reductase RAP2.